Consider the following 88-residue polypeptide: Co-chaperonin GroES (88 aa).

Belongs to the GroES chaperonin family. As to quaternary structure, heptamer of 7 subunits arranged in a ring. Interacts with the chaperonin GroEL.

Its subcellular location is the cytoplasm. Its function is as follows. Together with the chaperonin GroEL, plays an essential role in assisting protein folding. The GroEL-GroES system forms a nano-cage that allows encapsulation of the non-native substrate proteins and provides a physical environment optimized to promote and accelerate protein folding. GroES binds to the apical surface of the GroEL ring, thereby capping the opening of the GroEL channel. The protein is Co-chaperonin GroES of Treponema pallidum (strain Nichols).